A 131-amino-acid polypeptide reads, in one-letter code: MAKANTAVRVRKKVRKSVSEGIVHVHASFNNTIITITDRQGNALSWATSGGAGFKGSRKSTPFAAQVAAEHAGKVAQEYGVKNLEVRIKGPGPGRESAVRALNSLGFKITSISDVTPVPHNGCRPPKKRRI.

It belongs to the universal ribosomal protein uS11 family. As to quaternary structure, part of the 30S ribosomal subunit. Interacts with proteins S7 and S18. Binds to IF-3.

In terms of biological role, located on the platform of the 30S subunit, it bridges several disparate RNA helices of the 16S rRNA. Forms part of the Shine-Dalgarno cleft in the 70S ribosome. The polypeptide is Small ribosomal subunit protein uS11 (Chromobacterium violaceum (strain ATCC 12472 / DSM 30191 / JCM 1249 / CCUG 213 / NBRC 12614 / NCIMB 9131 / NCTC 9757 / MK)).